We begin with the raw amino-acid sequence, 350 residues long: uncharacterized protein (350 aa).

Residues Asp214, Asp225, His289, Glu318, and Glu332 each contribute to the Mn(2+) site.

This sequence belongs to the peptidase M24B family. Mn(2+) serves as cofactor.

This is an uncharacterized protein from Staphylococcus saprophyticus subsp. saprophyticus (strain ATCC 15305 / DSM 20229 / NCIMB 8711 / NCTC 7292 / S-41).